We begin with the raw amino-acid sequence, 256 residues long: Acetyl-coenzyme A carboxylase carboxyl transferase subunit alpha (256 aa).

Residues 1–236 (MSDVARILKE…KTAIVDELAE (236 aa)) enclose the CoA carboxyltransferase C-terminal domain.

The protein belongs to the AccA family. As to quaternary structure, acetyl-CoA carboxylase is a heterohexamer composed of biotin carboxyl carrier protein (AccB), biotin carboxylase (AccC) and two subunits each of ACCase subunit alpha (AccA) and ACCase subunit beta (AccD).

Its subcellular location is the cytoplasm. It carries out the reaction N(6)-carboxybiotinyl-L-lysyl-[protein] + acetyl-CoA = N(6)-biotinyl-L-lysyl-[protein] + malonyl-CoA. It functions in the pathway lipid metabolism; malonyl-CoA biosynthesis; malonyl-CoA from acetyl-CoA: step 1/1. Functionally, component of the acetyl coenzyme A carboxylase (ACC) complex. First, biotin carboxylase catalyzes the carboxylation of biotin on its carrier protein (BCCP) and then the CO(2) group is transferred by the carboxyltransferase to acetyl-CoA to form malonyl-CoA. This Streptococcus thermophilus (strain ATCC BAA-491 / LMD-9) protein is Acetyl-coenzyme A carboxylase carboxyl transferase subunit alpha.